The primary structure comprises 259 residues: MQTIAIQGRDLCVTYGSRQVLDHVDITLRCGEVAALLGPNGAGKSTLLKLLCGEMSGAGKLDYFGVPASQWPAEKLANHLGILPQQSSLTFPFTAQEVVELGAIPLNLPRKEVERVARHYMLKTDVLHLAASLYPSLSGGEKQRLHLARVLTQLHQAGQQRILMLDEPTSALDLAHQHNTLQLARQLADEEQCAVVVVLHDLNLAAQYSDRLILLHQGKIVCDAAPWQALTAERIEQVYGYQALVAAHPTRDFPMVYPA.

The ABC transporter domain occupies 6–242 (IQGRDLCVTY…ERIEQVYGYQ (237 aa)). Residue 38 to 45 (GPNGAGKS) coordinates ATP.

The protein belongs to the ABC transporter superfamily. Heme (hemin) importer (TC 3.A.1.14.5) family. The complex is composed of two ATP-binding proteins (HmuV), two transmembrane proteins (HmuU) and a solute-binding protein (HmuT).

The protein localises to the cell inner membrane. In terms of biological role, part of the ABC transporter complex HmuTUV involved in hemin import. Responsible for energy coupling to the transport system. The protein is Hemin import ATP-binding protein HmuV of Vibrio cholerae serotype O1 (strain ATCC 39315 / El Tor Inaba N16961).